We begin with the raw amino-acid sequence, 107 residues long: Large ribosomal subunit protein uL23 (107 aa).

This sequence belongs to the universal ribosomal protein uL23 family. In terms of assembly, part of the 50S ribosomal subunit. Contacts protein L29, and trigger factor when it is bound to the ribosome.

Its function is as follows. One of the early assembly proteins it binds 23S rRNA. One of the proteins that surrounds the polypeptide exit tunnel on the outside of the ribosome. Forms the main docking site for trigger factor binding to the ribosome. In Rhodopirellula baltica (strain DSM 10527 / NCIMB 13988 / SH1), this protein is Large ribosomal subunit protein uL23.